The sequence spans 244 residues: Futalosine hydrolase (244 aa).

Belongs to the PNP/UDP phosphorylase family. Futalosine hydrolase subfamily.

It catalyses the reaction futalosine + H2O = dehypoxanthine futalosine + hypoxanthine. It participates in quinol/quinone metabolism; menaquinone biosynthesis. In terms of biological role, catalyzes the hydrolysis of futalosine (FL) to dehypoxanthine futalosine (DHFL) and hypoxanthine, a step in the biosynthesis of menaquinone (MK, vitamin K2). Cannot directly use aminodeoxyfutalosine (AFL) as a substrate. The protein is Futalosine hydrolase of Acidothermus cellulolyticus (strain ATCC 43068 / DSM 8971 / 11B).